A 95-amino-acid polypeptide reads, in one-letter code: Integration host factor subunit beta (95 aa).

This sequence belongs to the bacterial histone-like protein family. In terms of assembly, heterodimer of an alpha and a beta chain.

Its function is as follows. This protein is one of the two subunits of integration host factor, a specific DNA-binding protein that functions in genetic recombination as well as in transcriptional and translational control. The sequence is that of Integration host factor subunit beta from Shewanella halifaxensis (strain HAW-EB4).